The primary structure comprises 99 residues: Plastocyanin (99 aa).

The Plastocyanin-like domain occupies 1–99 (VEILLGGEDG…AGMVGKVTVN (99 aa)). His-37, Cys-84, His-87, and Met-92 together coordinate Cu cation.

Belongs to the plastocyanin family. The cofactor is Cu(2+).

It is found in the plastid. It localises to the chloroplast thylakoid membrane. Its function is as follows. Participates in electron transfer between P700 and the cytochrome b6-f complex in photosystem I. This is Plastocyanin (PETE) from Sambucus nigra (European elder).